We begin with the raw amino-acid sequence, 495 residues long: Ectonucleoside triphosphate diphosphohydrolase 2 (495 aa).

Residues 1-4 (MAGK) lie on the Cytoplasmic side of the membrane. A helical membrane pass occupies residues 5-25 (LVSLVPPLLLAAVGLAGLLLL). At 26–462 (CVPTQDVREP…PGLRKGTHFS (437 aa)) the chain is on the extracellular side. Asparagine 64 is a glycosylation site (N-linked (GlcNAc...) asparagine). Cysteines 75 and 99 form a disulfide. The N-linked (GlcNAc...) asparagine glycan is linked to asparagine 129. Glutamate 165 functions as the Proton acceptor in the catalytic mechanism. 204–208 (GASTQ) contacts ATP. Intrachain disulfides connect cysteine 242–cysteine 284 and cysteine 265–cysteine 310. N-linked (GlcNAc...) asparagine glycosylation is found at asparagine 294 and asparagine 319. Cystine bridges form between cysteine 323/cysteine 328 and cysteine 377/cysteine 399. Asparagine 378 and asparagine 443 each carry an N-linked (GlcNAc...) asparagine glycan. A helical transmembrane segment spans residues 463-483 (SWVALLLLFTVLILAALVLLL). At 484-495 (RQVRSAKSPGAL) the chain is on the cytoplasmic side.

This sequence belongs to the GDA1/CD39 NTPase family. Ca(2+) serves as cofactor. Requires Mg(2+) as cofactor.

It localises to the cell membrane. In the nervous system, could hydrolyze ATP and other nucleotides to regulate purinergic neurotransmission. Hydrolyzes ADP only to a marginal extent. The polypeptide is Ectonucleoside triphosphate diphosphohydrolase 2 (Entpd2) (Mus musculus (Mouse)).